Reading from the N-terminus, the 149-residue chain is Arginine repressor (149 aa).

It belongs to the ArgR family.

It localises to the cytoplasm. Its pathway is amino-acid biosynthesis; L-arginine biosynthesis [regulation]. Its function is as follows. Regulates arginine biosynthesis genes. This Bacillus cereus (strain ATCC 10987 / NRS 248) protein is Arginine repressor.